Reading from the N-terminus, the 357-residue chain is MIETDKLAAKAVSAERIISASPASPNEEAFERALRPKLLDEYVGQEKVRGQLDIFMTAAKNRSEALDHVLLFGPPGLGKTTLAHIIAREMGVNLRQTSGPVLERPGDLAALLTNLEANDVLFIDEIHRLSPVVEEILYPALEDYQIDIMIGEGPAARSVKLDLQPFTLVGATTRAGMLTNPLRDRFGIVARLEFYTPAELAKIVTRSSGLLNAHIVDEGALEIAKRSRGTPRIANRLLRRVRDFAEVKADGIITREVADAALAMLDVDAVGFDLMDRKLLEAILHKFNGGPVGIDNLAAAIGEERDTIEDVLEPYLIQQGYLQRTPRGRVATASAYQHFGLGAPKSGPVRDLWDDNQ.

Residues 4–195 (TDKLAAKAVS…FGIVARLEFY (192 aa)) form a large ATPase domain (RuvB-L) region. Residues Leu34, Arg35, Gly76, Lys79, Thr80, Thr81, 142–144 (EDY), Arg185, Tyr195, and Arg232 contribute to the ATP site. Thr80 lines the Mg(2+) pocket. Residues 196–266 (TPAELAKIVT…VADAALAMLD (71 aa)) are small ATPAse domain (RuvB-S). Residues 269–357 (AVGFDLMDRK…PVRDLWDDNQ (89 aa)) are head domain (RuvB-H). Residues Arg305, Arg324, and Arg329 each coordinate DNA.

It belongs to the RuvB family. As to quaternary structure, homohexamer. Forms an RuvA(8)-RuvB(12)-Holliday junction (HJ) complex. HJ DNA is sandwiched between 2 RuvA tetramers; dsDNA enters through RuvA and exits via RuvB. An RuvB hexamer assembles on each DNA strand where it exits the tetramer. Each RuvB hexamer is contacted by two RuvA subunits (via domain III) on 2 adjacent RuvB subunits; this complex drives branch migration. In the full resolvosome a probable DNA-RuvA(4)-RuvB(12)-RuvC(2) complex forms which resolves the HJ.

The protein localises to the cytoplasm. It catalyses the reaction ATP + H2O = ADP + phosphate + H(+). Its function is as follows. The RuvA-RuvB-RuvC complex processes Holliday junction (HJ) DNA during genetic recombination and DNA repair, while the RuvA-RuvB complex plays an important role in the rescue of blocked DNA replication forks via replication fork reversal (RFR). RuvA specifically binds to HJ cruciform DNA, conferring on it an open structure. The RuvB hexamer acts as an ATP-dependent pump, pulling dsDNA into and through the RuvAB complex. RuvB forms 2 homohexamers on either side of HJ DNA bound by 1 or 2 RuvA tetramers; 4 subunits per hexamer contact DNA at a time. Coordinated motions by a converter formed by DNA-disengaged RuvB subunits stimulates ATP hydrolysis and nucleotide exchange. Immobilization of the converter enables RuvB to convert the ATP-contained energy into a lever motion, pulling 2 nucleotides of DNA out of the RuvA tetramer per ATP hydrolyzed, thus driving DNA branch migration. The RuvB motors rotate together with the DNA substrate, which together with the progressing nucleotide cycle form the mechanistic basis for DNA recombination by continuous HJ branch migration. Branch migration allows RuvC to scan DNA until it finds its consensus sequence, where it cleaves and resolves cruciform DNA. The sequence is that of Holliday junction branch migration complex subunit RuvB from Ralstonia pickettii (strain 12J).